We begin with the raw amino-acid sequence, 249 residues long: Enolase-phosphatase E1 (249 aa).

Residues D14 and E16 each coordinate Mg(2+). Substrate-binding positions include 141 to 142 (SS) and K175. Residue D200 participates in Mg(2+) binding.

The protein belongs to the HAD-like hydrolase superfamily. MasA/MtnC family. In terms of assembly, monomer. The cofactor is Mg(2+).

The protein localises to the cytoplasm. Its subcellular location is the nucleus. The catalysed reaction is 5-methylsulfanyl-2,3-dioxopentyl phosphate + H2O = 1,2-dihydroxy-5-(methylsulfanyl)pent-1-en-3-one + phosphate. Its pathway is amino-acid biosynthesis; L-methionine biosynthesis via salvage pathway; L-methionine from S-methyl-5-thio-alpha-D-ribose 1-phosphate: step 3/6. It functions in the pathway amino-acid biosynthesis; L-methionine biosynthesis via salvage pathway; L-methionine from S-methyl-5-thio-alpha-D-ribose 1-phosphate: step 4/6. Its function is as follows. Bifunctional enzyme that catalyzes the enolization of 2,3-diketo-5-methylthiopentyl-1-phosphate (DK-MTP-1-P) into the intermediate 2-hydroxy-3-keto-5-methylthiopentenyl-1-phosphate (HK-MTPenyl-1-P), which is then dephosphorylated to form the acireductone 1,2-dihydroxy-3-keto-5-methylthiopentene (DHK-MTPene). In Drosophila mojavensis (Fruit fly), this protein is Enolase-phosphatase E1.